The sequence spans 1233 residues: Anion exchange protein 3 (1233 aa).

Over residues 1-11 (MANGVIPPPGG) the composition is skewed to pro residues. Disordered stretches follow at residues 1-320 (MANG…RRPH) and 431-500 (DDKD…DGHR). The Cytoplasmic segment spans residues 1-709 (MANGVIPPPG…DLRDALHSQC (709 aa)). The segment covering 58-73 (DPEKPSRSFSERDFAF) has biased composition (basic and acidic residues). 2 stretches are compositionally biased toward basic residues: residues 74–97 (HRHISHHTHHPLSARLPPPHKLRR) and 104–113 (RHTRRKRKKE). Positions 137–153 (GEEEEEEEEEGESETEA) are enriched in acidic residues. Ser-168, Ser-171, Ser-176, and Ser-199 each carry phosphoserine. Over residues 201–216 (QRSVSSSSPRARAPRV) the composition is skewed to low complexity. The span at 268–290 (DDMKSHRLEDNPGVRRHLVKEPS) shows a compositional bias: basic and acidic residues. An Omega-N-methylarginine modification is found at Arg-296. Positions 437–450 (SFPRNPSSSSVNSV) are enriched in low complexity. Positions 482-500 (HDPDAKERPLHMPGGDGHR) are enriched in basic and acidic residues. 4 helical membrane passes run 710–732 (VAAVLFIYFAALSPAITFGGLLG), 738–775 (LMGVSELIVSTAVLGVLFSLLGAQPLLVVGFSGPLLVF), 795–817 (VWVGLWLVVFVLALVGAEGTFLV), and 827–848 (IFAFLISLIFIYETFHKLYKVF). The segment at 710 to 1233 (VAAVLFIYFA…DEYNELHMPV (524 aa)) is membrane (anion exchange). Asn-874 is a glycosylation site (N-linked (GlcNAc...) asparagine). A helical transmembrane segment spans residues 894–911 (ALLSLILMLGTFLIAFFL). The Cytoplasmic segment spans residues 912–926 (RKFRNSRFLGGKARR). The next 5 membrane-spanning stretches (helical) occupy residues 927-947 (IIGDFGIPISILLMVLVDYSI), 981-1003 (PFPPWMMVAAAVPALLVLILIFM), 1029-1050 (LLLIGSLGGLCGLFGLPWLTAA), 1084-1129 (VTGV…IQLS), and 1156-1192 (MHLFTCIQLACIALLWVVKSTAASLAFPFLLLLTVPL). Cys-1166 carries S-palmitoyl cysteine lipidation.

It belongs to the anion exchanger (TC 2.A.31) family.

It is found in the cell membrane. The enzyme catalyses hydrogencarbonate(in) + chloride(out) = hydrogencarbonate(out) + chloride(in). Functionally, sodium-independent anion exchanger which mediates the electroneutral exchange of chloride for bicarbonate ions across the cell membrane. May be involved in the regulation of intracellular pH, and the modulation of cardiac action potential. This chain is Anion exchange protein 3 (SLC4A3), found in Oryctolagus cuniculus (Rabbit).